The sequence spans 369 residues: DNA replication and repair protein RecF (369 aa).

30–37 (GDNAQGKT) lines the ATP pocket.

The protein belongs to the RecF family.

Its subcellular location is the cytoplasm. In terms of biological role, the RecF protein is involved in DNA metabolism; it is required for DNA replication and normal SOS inducibility. RecF binds preferentially to single-stranded, linear DNA. It also seems to bind ATP. This chain is DNA replication and repair protein RecF, found in Streptococcus equi subsp. zooepidemicus (strain MGCS10565).